The following is an 822-amino-acid chain: Putative ESX-1 scaffolding and assembly protein SaeB (822 aa).

In terms of biological role, may be involved in assembly of the ESX-1 / type VII specialized secretion system (T7SS), which exports several proteins including EsxA and EsxB. Involved in DNA conjugation in recipient (MKD8) but not donor (mc(2)155) strain. In Mycolicibacterium smegmatis (strain MKD8) (Mycobacterium smegmatis), this protein is Putative ESX-1 scaffolding and assembly protein SaeB (saeB).